Reading from the N-terminus, the 1388-residue chain is DNA-directed RNA polymerase subunit beta' (1388 aa).

C65, C67, C80, and C83 together coordinate Zn(2+). Positions 456, 458, and 460 each coordinate Mg(2+). Residues C812, C887, C894, and C897 each contribute to the Zn(2+) site.

It belongs to the RNA polymerase beta' chain family. The RNAP catalytic core consists of 2 alpha, 1 beta, 1 beta' and 1 omega subunit. When a sigma factor is associated with the core the holoenzyme is formed, which can initiate transcription. Requires Mg(2+) as cofactor. Zn(2+) is required as a cofactor.

It carries out the reaction RNA(n) + a ribonucleoside 5'-triphosphate = RNA(n+1) + diphosphate. Its function is as follows. DNA-dependent RNA polymerase catalyzes the transcription of DNA into RNA using the four ribonucleoside triphosphates as substrates. This Protochlamydia amoebophila (strain UWE25) protein is DNA-directed RNA polymerase subunit beta'.